The sequence spans 243 residues: UMP-CMP kinase 2 (243 aa).

Position 69–74 (69–74 (GSGKGT)) interacts with ATP. Residues 89-118 (SAGDLLRSEISTGREKGELILNIIKEGKIV) are NMP. A ribonucleoside 5'-phosphate contacts are provided by residues arginine 95, 116–118 (KIV), and 143–146 (GFPR). CMP is bound at residue asparagine 150. The segment at 181-189 (GRNQGRVDD) is LID. Position 182 (arginine 182) interacts with ATP. A ribonucleoside 5'-phosphate contacts are provided by arginine 186 and arginine 197.

It belongs to the adenylate kinase family. UMP-CMP kinase subfamily. As to quaternary structure, monomer. The cofactor is Mg(2+).

Its subcellular location is the cytoplasm. It localises to the nucleus. The catalysed reaction is UMP + ATP = UDP + ADP. The enzyme catalyses CMP + ATP = CDP + ADP. It carries out the reaction dCMP + ATP = dCDP + ADP. Functionally, catalyzes the phosphorylation of pyrimidine nucleoside monophosphates at the expense of ATP. Plays an important role in de novo pyrimidine nucleotide biosynthesis. Has preference for UMP and CMP as phosphate acceptors. This is UMP-CMP kinase 2 from Oryza sativa subsp. japonica (Rice).